The sequence spans 267 residues: 4-hydroxy-tetrahydrodipicolinate reductase (267 aa).

NAD(+) is bound by residues 8–13 (GAAGRM) and aspartate 34. Residue arginine 35 participates in NADP(+) binding. NAD(+)-binding positions include 98–100 (GTT) and 122–125 (AANF). The active-site Proton donor/acceptor is histidine 155. Histidine 156 serves as a coordination point for (S)-2,3,4,5-tetrahydrodipicolinate. Lysine 159 serves as the catalytic Proton donor. 165 to 166 (GT) serves as a coordination point for (S)-2,3,4,5-tetrahydrodipicolinate.

It belongs to the DapB family.

It localises to the cytoplasm. The enzyme catalyses (S)-2,3,4,5-tetrahydrodipicolinate + NAD(+) + H2O = (2S,4S)-4-hydroxy-2,3,4,5-tetrahydrodipicolinate + NADH + H(+). The catalysed reaction is (S)-2,3,4,5-tetrahydrodipicolinate + NADP(+) + H2O = (2S,4S)-4-hydroxy-2,3,4,5-tetrahydrodipicolinate + NADPH + H(+). It functions in the pathway amino-acid biosynthesis; L-lysine biosynthesis via DAP pathway; (S)-tetrahydrodipicolinate from L-aspartate: step 4/4. Functionally, catalyzes the conversion of 4-hydroxy-tetrahydrodipicolinate (HTPA) to tetrahydrodipicolinate. The polypeptide is 4-hydroxy-tetrahydrodipicolinate reductase (Pseudomonas putida (strain ATCC 47054 / DSM 6125 / CFBP 8728 / NCIMB 11950 / KT2440)).